Reading from the N-terminus, the 825-residue chain is Breast cancer anti-estrogen resistance protein 3 homolog (825 aa).

Residue alanine 2 is modified to N-acetylalanine. A disordered region spans residues 31 to 93 (KSPLTEHRPD…PVTQDSIQES (63 aa)). A phosphoserine mark is found at serine 32, serine 78, serine 83, serine 182, and serine 290. The segment covering 75–93 (HSKSPQQNSPVTQDSIQES) has biased composition (polar residues). In terms of domain architecture, SH2 spans 154–253 (WYHGRIPRQV…QSGAIIFQPI (100 aa)). Lysine 334 is subject to N6-methyllysine. Phosphoserine occurs at positions 358, 363, and 375. Arginine 442 is subject to Omega-N-methylarginine. Serine 471 bears the Phosphoserine mark. A Ras-GEF domain is found at 548–818 (DPKVIAQHIL…TALSRKLEPP (271 aa)). The mediates the interaction with BCAR1/p130CAS stretch occupies residues 744 to 748 (LATAR).

As to quaternary structure, part of a complex comprised of PTPRA, BCAR1, BCAR3 (via SH2 domain) and SRC; the formation of the complex is dependent on integrin mediated-tyrosine phosphorylation of PTPRA. Within the complex, interacts (via SH2 domain) with PTPRA (when phosphorylated on 'Tyr-798'). Interacts (via Ras-GEF domain) with BCAR1. Interacts (via Ras-GEF domain) with NEDD9. Interacts with PTK2/FAK1. Interacts with PTPN1. Interacts (via SH2 domain) with EGFR (when tyrosine-phosphorylated). Post-translationally, phosphorylated on tyrosine residues.

The protein resides in the cytoplasm. It is found in the cell junction. The protein localises to the focal adhesion. Its function is as follows. Acts as an adapter protein downstream of several growth factor receptors to promote cell proliferation, migration, and redistribution of actin fibers. Specifically involved in INS/insulin signaling pathway by mediating MAPK1/ERK2-MAPK3/ERK1 activation and DNA synthesis. Promotes insulin-mediated membrane ruffling. In response to vasoconstrictor peptide EDN1, involved in the activation of RAP1 downstream of PTK2B via interaction with phosphorylated BCAR1. Inhibits cell migration and invasion via regulation of TGFB-mediated matrix digestion, actin filament rearrangement, and inhibition of invadopodia activity. May inhibit TGFB-SMAD signaling, via facilitating BCAR1 and SMAD2 and/or SMAD3 interaction. Regulates EGF-induced DNA synthesis. Required for the maintenance of ocular lens morphology and structural integrity, potentially via regulation of focal adhesion complex signaling. Acts upstream of PTPRA to regulate the localization of BCAR1 and PTPRA to focal adhesions, via regulation of SRC-mediated phosphorylation of PTPRA. Positively regulates integrin-induced tyrosine phosphorylation of BCAR1. Acts as a guanine nucleotide exchange factor (GEF) for small GTPases RALA, RAP1A and RRAS. However, in a contrasting study, lacks GEF activity towards RAP1. The polypeptide is Breast cancer anti-estrogen resistance protein 3 homolog (BCAR3) (Macaca fascicularis (Crab-eating macaque)).